A 603-amino-acid chain; its full sequence is Ankyrin repeat and LEM domain-containing protein 2 homolog (603 aa).

A helical; Signal-anchor for type III membrane protein membrane pass occupies residues Gly-2 to Ser-22. 2 ANK repeats span residues Phe-161 to Phe-190 and Asn-221 to Thr-250. Disordered regions lie at residues Ile-446–Asp-465 and Leu-505–Thr-538. The span at Asp-456 to Asp-465 shows a compositional bias: acidic residues.

Belongs to the ANKLE2 family. As to quaternary structure, interacts with baf-1. Interacts with protein phosphatase 2A (PP2A) components.

The protein localises to the nucleus membrane. Its function is as follows. Involved in mitotic nuclear envelope reassembly by promoting dephosphorylation of baf-1 during mitotic exit. Coordinates the control of baf-1 dephosphorylation by inhibiting VRK1 kinase and promoting dephosphorylation of baf-1 by protein phosphatase 2A (PP2A), thereby facilitating nuclear envelope assembly. It is unclear whether it acts as a real PP2A regulatory subunit or whether it is involved in recruitment of the PP2A complex. This Caenorhabditis elegans protein is Ankyrin repeat and LEM domain-containing protein 2 homolog (lem-4).